We begin with the raw amino-acid sequence, 407 residues long: uncharacterized protein (407 aa).

A run of 12 helical transmembrane segments spans residues I22 to V42, L51 to A71, A101 to V121, V126 to V146, V154 to V174, A179 to L199, G227 to Y247, L258 to I278, V286 to V306, V309 to G329, A347 to A367, and A369 to L389.

This sequence belongs to the major facilitator superfamily. YhhS family.

It is found in the cell inner membrane. This is an uncharacterized protein from Burkholderia mallei (strain NCTC 10229).